Consider the following 931-residue polypeptide: MQNPTQTMHIYDMPLRVIAGLSTLAKTTEEDDNTSTGIVVSEVGEPQVVNHPAWIDPFVAYQLRAPRKNITPDFIFGRADIGNAFSAFLPRRFSAPAVGTRLVVDPVFTYQQRTVLGLYNYFHADFYYIVHVPAPLGTGIYLKIYAPEFDTTTVTRGIRFKPSASPTIALSVPWSNDLSTVETSVGRVGQSGGSIVIETIEDNSNETVNTPLSITVWCCMANIKATGYRHADTSAYNEKGMNFISVPVPKPPVPPTKPITGEEQADNEVTAEGGKLVQELVYDHSAIPVAPVVETQAEQPEVPVSLVATRKNDTGHLATKWYDFAKISLSNPANMNWTTLTIDPYNNVTLSRDGESMVLPWRRNVWTTGSKSIGYIRTMVAQINIPRPPQISGVLEVKDSINNSSISLVEFGGKVEIPIIPKVMNGLATTASLPRHRLNPWMRTAESKVELQYRIIAFNRTSDIADLNVSVLLRPGDSQFQLPMKPDNNVDTRHFELVEALMYHYDSLRIRGEEQSLPENAPNAVSNPQQFITPATALSAEEYNVHEALGETEELELDEFPVLVFKGNVPVDSVTSIPLDLATIYDFAWDGEQNAISQKFQRFAHLIPKSAGGFGPVIGNYTITANLPTGVAGRILHNCLPGDCVDLAVSRIFGLKSLLGVAGTAVSAIGGPLLNGLVNTAAPILSGAAHAIGGNVVGGLADAVIDIGSNLLTPKEKEQPSANSSAISGDIPISRFVEMLKYVKENYQDNPVFPTLLVEPQNFISNAMTALKTIPIEVFANMRNVKVERNLFDRTVVPTVKEATLADIVIPNHMYGYILRDFLQNKRAFQSGTKQNVYFQQFLTVLSQRNIRTHITLNDITSCSIDSESIANKIERVKHYLSTNSSGETTEEFSRTDTGLLPTTTRKIVLGESKRRTERYVAETVFPSVRQ.

In terms of processing, proteolytic processing of ORF4 polyprotein yields the VP4a, VP4b and VP4c capsid proteins.

It localises to the virion. Functionally, ORF4 polyprotein codes for VP4a, VP4b, and VP4c, three of the four proteins that self-assemble to form the icosahedral capsid. The capsid is made of VP3 (coded by ORF3), VP4a, VP4b and VP4c. The polypeptide is ORF4 polyprotein (Drosophila melanogaster (Fruit fly)).